We begin with the raw amino-acid sequence, 198 residues long: Chromophore lyase CpcT/CpeT 3 (198 aa).

Belongs to the CpcT/CpeT biliprotein lyase family.

Covalently attaches a chromophore to Cys residue(s) of phycobiliproteins. This Synechococcus sp. (strain JA-3-3Ab) (Cyanobacteria bacterium Yellowstone A-Prime) protein is Chromophore lyase CpcT/CpeT 3.